The chain runs to 1029 residues: Protein STABILIZED1 (1029 aa).

The Ubiquitin-like domain occupies 1 to 85 (MVFLSIPNGK…VIIHVLLLGG (85 aa)). G85 is covalently cross-linked (Glycyl lysine isopeptide (Gly-Lys) (interchain with K-? in acceptor proteins)). The disordered stretch occupies residues 142 to 170 (AAPGVGRGAGKPSEAEAEDDEEAEEKRYD). Residues 210–243 (DSRRKDRREAKLKEEIEKYRASNPKITEQFADLK) adopt a coiled-coil conformation. 15 HAT repeats span residues 367–399 (YDRN…VEEV), 401–431 (GKIK…CRLA), 432–462 (NPED…KLEH), 463–494 (DVEN…LANE), 496–524 (DARI…LETY), 526–554 (ESKK…LEEA), 639–671 (GSIE…LEKS), 673–705 (GSRE…EKWL), 707–739 (GDVP…LEFE), 741–772 (KEPE…VERE), 774–806 (GNVE…LEER), 808–840 (KHLE…LEEK), 842–874 (NGLN…AELR), 876–908 (DNKR…MAPR), and 940–972 (KKVE…FELQ). The TPR 1 repeat unit spans residues 625–658 (KRTWVADADECKKRGSIETARAIYAHALSVFLTK). The stretch at 794 to 827 (FKLWLMLGQLEERFKHLEQARKAYDTGLKHCPHC) is one TPR 2 repeat. One copy of the TPR 3 repeat lies at 926-959 (PHVTIAVAKLFWQDKKVEKARAWFERAVTVGPDI).

In terms of assembly, component of a pre-mRNA splicing complex. Interacts with ZOP1. Interacts with PRP31. Ubiquitous.

It is found in the nucleus. The protein resides in the cajal body. Its function is as follows. Pre-mRNA splicing factor required for splicing and for the turnover of unstable transcripts. May be a U5 snRNP-associated protein involved in the formation of U4/U6-U5 tri-snRNP. Involved in responses to abiotic stresses. Involved in microRNAs (miRNAs) biogenesis by functioning in primary miRNAs (pri-miRNAs) splicing. Required for DNA methylation and transcriptional silencing through the RNA-directed DNA methylation (RdDM) pathway. The protein is Protein STABILIZED1 (STA1) of Arabidopsis thaliana (Mouse-ear cress).